An 88-amino-acid polypeptide reads, in one-letter code: Small ribosomal subunit protein uS17 (88 aa).

This sequence belongs to the universal ribosomal protein uS17 family. Part of the 30S ribosomal subunit.

Its function is as follows. One of the primary rRNA binding proteins, it binds specifically to the 5'-end of 16S ribosomal RNA. This is Small ribosomal subunit protein uS17 from Pseudomonas savastanoi pv. phaseolicola (strain 1448A / Race 6) (Pseudomonas syringae pv. phaseolicola (strain 1448A / Race 6)).